Consider the following 214-residue polypeptide: tRNA (guanine-N(7)-)-methyltransferase (214 aa).

Glutamate 45, aspartate 70, asparagine 97, and asparagine 119 together coordinate S-adenosyl-L-methionine. Lysine 123 serves as a coordination point for substrate. Positions 125-130 (RHNKRR) are interaction with RNA. Substrate-binding positions include aspartate 155 and 193–196 (TEYE).

It belongs to the class I-like SAM-binding methyltransferase superfamily. TrmB family.

It catalyses the reaction guanosine(46) in tRNA + S-adenosyl-L-methionine = N(7)-methylguanosine(46) in tRNA + S-adenosyl-L-homocysteine. It participates in tRNA modification; N(7)-methylguanine-tRNA biosynthesis. Functionally, catalyzes the formation of N(7)-methylguanine at position 46 (m7G46) in tRNA. In Clostridium novyi (strain NT), this protein is tRNA (guanine-N(7)-)-methyltransferase.